Reading from the N-terminus, the 627-residue chain is Protein fem-1 homolog B (627 aa).

ANK repeat units follow at residues 45 to 74, 87 to 116, 120 to 149, and 153 to 182; these read QRSTPLIIAARNGHAKVVRLLLEHYRVQTQ, DGATALWCAAGAGHFEVVKLLVSHGANVNH, TNSTPLRAACFDGRLDIVKYLVENNANISI, and YDNTCLMIAAYKGHTDVVRYLLEQRADPNA. Residues H185, C186, and H218 each coordinate Zn(2+). ANK repeat units lie at residues 186–215 and 218–248; these read CGATALHFAAEAGHIDIVKELIKWRAAIVV and HGMTPLKVAAESCKADVVELLLSHADCDRRS. A TPR repeat occupies 344-377; the sequence is SHPIIYRGAVYADNMEFEQCIKLWLHALHLRQKG. ANK repeat units follow at residues 483 to 527 and 531 to 568; these read EGFS…EVNA and EGNSALHIIVQYNRPISDFLTLHSIIISLVEAGAHTDM.

It belongs to the fem-1 family. As to quaternary structure, component of a CRL2 E3 ubiquitin-protein ligase complex, also named ECS (Elongin BC-CUL2/5-SOCS-box protein) complex, composed of CUL2, Elongin BC (ELOB and ELOC), RBX1 and substrate-specific adapter FEM1B. Homooligomer. Interacts with PPM1F and PHTF1. Interacts with the death domain of FAS/TNFRSF6 and TNFRSF1A. Interacts with CHEK1. Interacts with NKX3-1. In terms of tissue distribution, expressed in pancreatic islets, within both beta cells and non-beta cells (at protein level). Highly expressed in adult testis; expressed in all types of spermatogonia. Also expressed in the prostate of neonatal mice.

It localises to the cytoplasm. Its subcellular location is the nucleus. It participates in protein modification; protein ubiquitination. Activity of the CRL2(FEM1B) complex toward FNIP1 is inhibited by BEX family proteins (BEX1, BEX2, BEX3 and/or BEX4) in absence of reductive stress. Mechanistically, BEX proteins act as pseudosubstrate inhibitors that associate with FEM1B via zinc in absence of reductive stress, thereby preventing association between FEM1B and FNIP1. Substrate-recognition component of a Cul2-RING (CRL2) E3 ubiquitin-protein ligase complex of the DesCEND (destruction via C-end degrons) pathway, which recognizes a C-degron located at the extreme C terminus of target proteins, leading to their ubiquitination and degradation. The C-degron recognized by the DesCEND pathway is usually a motif of less than ten residues and can be present in full-length proteins, truncated proteins or proteolytically cleaved forms. The CRL2(FEM1B) complex specifically recognizes proteins ending with -Gly-Leu-Asp-Arg, such as CDK5R1, leading to their ubiquitination and degradation. Also acts as a regulator of the reductive stress response by mediating ubiquitination of reduced FNIP1: in response to reductive stress, the CRL2(FEM1B) complex specifically recognizes a conserved Cys degron in FNIP1 when this degron is reduced, leading to FNIP1 degradation and subsequent activation of mitochondria to recalibrate reactive oxygen species (ROS). Mechanistically, recognizes and binds reduced FNIP1 through two interface zinc ions, which act as a molecular glue that recruit reduced FNIP1 to FEM1B. Promotes ubiquitination of GLI1, suppressing GLI1 transcriptional activator activity. Promotes ubiquitination and degradation of ANKRD37. Promotes ubiquitination and degradation of SLBP. Involved in apoptosis by acting as a death receptor-associated protein that mediates apoptosis. Also involved in glucose homeostasis in pancreatic islet. May also act as an adapter/mediator in replication stress-induced signaling that leads to the activation of CHEK1. This is Protein fem-1 homolog B from Mus musculus (Mouse).